The sequence spans 438 residues: Anaerobic glycerol-3-phosphate dehydrogenase subunit B (438 aa).

Belongs to the anaerobic G-3-P dehydrogenase subunit B family. In terms of assembly, composed of a catalytic GlpA/B dimer and of membrane bound GlpC. FMN is required as a cofactor.

It carries out the reaction a quinone + sn-glycerol 3-phosphate = dihydroxyacetone phosphate + a quinol. It functions in the pathway polyol metabolism; glycerol degradation via glycerol kinase pathway; glycerone phosphate from sn-glycerol 3-phosphate (anaerobic route): step 1/1. Its function is as follows. Conversion of glycerol 3-phosphate to dihydroxyacetone. Uses fumarate or nitrate as electron acceptor. The chain is Anaerobic glycerol-3-phosphate dehydrogenase subunit B from Vibrio vulnificus (strain CMCP6).